The following is a 197-amino-acid chain: Large ribosomal subunit protein uL10 (197 aa).

Residues 162-197 (READGETAETPAQETASDDSKSTKAEASDASTTENK) are disordered. Over residues 179–188 (DDSKSTKAEA) the composition is skewed to basic and acidic residues.

The protein belongs to the universal ribosomal protein uL10 family. As to quaternary structure, part of the ribosomal stalk of the 50S ribosomal subunit. The N-terminus interacts with L11 and the large rRNA to form the base of the stalk. The C-terminus forms an elongated spine to which L12 dimers bind in a sequential fashion forming a multimeric L10(L12)X complex.

Functionally, forms part of the ribosomal stalk, playing a central role in the interaction of the ribosome with GTP-bound translation factors. The chain is Large ribosomal subunit protein uL10 from Oenococcus oeni (strain ATCC BAA-331 / PSU-1).